Reading from the N-terminus, the 528-residue chain is Apolipoprotein N-acyltransferase (528 aa).

Helical transmembrane passes span 8-28 (IMLL…AVGA), 69-89 (AFWI…WWLG), 99-119 (FAWA…VFYG), 178-198 (VLGL…PALL), and 203-223 (GAKL…GYGA). Positions 241-490 (VQPNIDQAAK…EGVENATFTL (250 aa)) constitute a CN hydrolase domain. Residue E285 is the Proton acceptor of the active site. K349 is a catalytic residue. Catalysis depends on C402, which acts as the Nucleophile.

It belongs to the CN hydrolase family. Apolipoprotein N-acyltransferase subfamily.

The protein localises to the cell inner membrane. The catalysed reaction is N-terminal S-1,2-diacyl-sn-glyceryl-L-cysteinyl-[lipoprotein] + a glycerophospholipid = N-acyl-S-1,2-diacyl-sn-glyceryl-L-cysteinyl-[lipoprotein] + a 2-acyl-sn-glycero-3-phospholipid + H(+). The protein operates within protein modification; lipoprotein biosynthesis (N-acyl transfer). Functionally, catalyzes the phospholipid dependent N-acylation of the N-terminal cysteine of apolipoprotein, the last step in lipoprotein maturation. The polypeptide is Apolipoprotein N-acyltransferase (Allorhizobium ampelinum (strain ATCC BAA-846 / DSM 112012 / S4) (Agrobacterium vitis (strain S4))).